The following is a 277-amino-acid chain: Urease accessory protein UreD (277 aa).

Belongs to the UreD family. UreD, UreF and UreG form a complex that acts as a GTP-hydrolysis-dependent molecular chaperone, activating the urease apoprotein by helping to assemble the nickel containing metallocenter of UreC. The UreE protein probably delivers the nickel.

The protein localises to the cytoplasm. Its function is as follows. Required for maturation of urease via the functional incorporation of the urease nickel metallocenter. The protein is Urease accessory protein UreD of Pseudomonas putida (strain ATCC 47054 / DSM 6125 / CFBP 8728 / NCIMB 11950 / KT2440).